Consider the following 227-residue polypeptide: Mitochondrial inner membrane protease ATP23 (227 aa).

Histidine 129 contributes to the a divalent metal cation binding site. Glutamate 130 is a catalytic residue. Histidine 133 provides a ligand contact to a divalent metal cation.

The protein belongs to the peptidase M76 family.

The protein resides in the mitochondrion inner membrane. In terms of biological role, has a dual role in the assembly of mitochondrial ATPase. Acts as a protease that removes N-terminal residues of mitochondrial ATPase CF(0) subunit 6 at the intermembrane space side. Also involved in the correct assembly of the membrane-embedded ATPase CF(0) particle, probably mediating association of subunit 6 with the subunit 9 ring. In Cryptococcus neoformans var. neoformans serotype D (strain JEC21 / ATCC MYA-565) (Filobasidiella neoformans), this protein is Mitochondrial inner membrane protease ATP23 (ATP23).